A 211-amino-acid polypeptide reads, in one-letter code: BAG family molecular chaperone regulator 2 (211 aa).

Residue Ala-2 is modified to N-acetylalanine. Phosphoserine is present on residues Ser-20, Ser-31, and Ser-73. The stretch at 20–61 (SMADRSSRLLESLDQLELRVEALREAATAVEQEKEVLLEMIH) forms a coiled coil. A BAG domain is found at 109 to 189 (SLKHATRIID…NIENADKAIK (81 aa)).

In terms of assembly, binds to the ATPase domain of HSP/HSC70 chaperones. May interact with NWD1. Interacts with HSPA1A (via NBD), HSPA1B (via NBD) and HSPA8. May interact with DNJC9; the interaction seems to be histone-dependent.

Its function is as follows. Co-chaperone for HSP70 and HSC70 chaperone proteins. Acts as a nucleotide-exchange factor (NEF) promoting the release of ADP from the HSP70 and HSC70 proteins thereby triggering client/substrate protein release. The sequence is that of BAG family molecular chaperone regulator 2 from Bos taurus (Bovine).